A 146-amino-acid chain; its full sequence is Hemoglobin subunit beta (146 aa).

The residue at position 1 (valine 1) is an N-acetylvaline; partial. In terms of domain architecture, Globin spans 2 to 146 (HLTDAEKAAV…VANALAHKYH (145 aa)). At threonine 12 the chain carries Phosphothreonine. Lysine 59 bears the N6-acetyllysine mark. Histidine 63 lines the heme b pocket. Lysine 82 bears the N6-acetyllysine mark. Histidine 92 serves as a coordination point for heme b. Cysteine 93 carries the S-nitrosocysteine modification. Lysine 144 bears the N6-acetyllysine mark.

Belongs to the globin family. As to quaternary structure, heterotetramer of two alpha chains and two beta chains. As to expression, red blood cells.

Involved in oxygen transport from the lung to the various peripheral tissues. In Procavia capensis habessinica (Abyssinian hyrax), this protein is Hemoglobin subunit beta (HBB).